Here is a 352-residue protein sequence, read N- to C-terminus: Ion-translocating oxidoreductase complex subunit D (352 aa).

The next 5 membrane-spanning stretches (helical) occupy residues 20–40, 42–62, 78–109, 123–143, and 148–168; these read IMLL…WFFG, GTLV…ALVL, ALLT…VIIA, PAMI…TSWL, and IAVN…GHTA. Position 187 is an FMN phosphoryl threonine (threonine 187). 5 helical membrane-spanning segments follow: residues 214 to 234, 242 to 262, 267 to 287, 301 to 321, and 322 to 342; these read ILAG…GVWL, WHIP…GWLF, LAAP…FFIL, LIFG…GGYP, and DGVA…DYYT.

This sequence belongs to the NqrB/RnfD family. As to quaternary structure, the complex is composed of six subunits: RsxA, RsxB, RsxC, RsxD, RsxE and RsxG. FMN serves as cofactor.

The protein localises to the cell inner membrane. In terms of biological role, part of a membrane-bound complex that couples electron transfer with translocation of ions across the membrane. Required to maintain the reduced state of SoxR. The chain is Ion-translocating oxidoreductase complex subunit D from Escherichia coli O6:K15:H31 (strain 536 / UPEC).